The primary structure comprises 298 residues: Pheromone-regulated membrane protein 9 (298 aa).

Topologically, residues 1–111 (MSPQYHFYFV…YWIYEVTRHK (111 aa)) are cytoplasmic. A helical transmembrane segment spans residues 112-132 (AAVILLVLIVTSILLLVFFYN). At 133–137 (TEFCV) the chain is on the extracellular side. Residues 138–158 (AFEILLFSFCFPGTCMVVIAF) traverse the membrane as a helical segment. Topologically, residues 159-298 (SEPIGDREFK…QEYPGVDEFF (140 aa)) are cytoplasmic. Residues 235–262 (SSASNVKDAQSNDETAGTPNEAAESSSF) are disordered. Residues 297–298 (FF) form a COPII binding region.

Belongs to the DUP/COS family. In terms of assembly, interacts with PRM8. Binds to COPII coated vesicles.

The protein localises to the cell membrane. May be involved in endoplasmic reticulum exit trafficking of proteins. The protein is Pheromone-regulated membrane protein 9 (PRM9) of Saccharomyces cerevisiae (strain ATCC 204508 / S288c) (Baker's yeast).